Here is a 260-residue protein sequence, read N- to C-terminus: Putative [LysW]-aminoadipate/[LysW]-glutamate kinase (260 aa).

Substrate is bound by residues 35-36 (GG), R62, and N162.

It belongs to the acetylglutamate kinase family. LysZ subfamily.

Its subcellular location is the cytoplasm. It carries out the reaction [amino-group carrier protein]-C-terminal-N-(1,4-dicarboxybutan-1-yl)-L-glutamine + ATP = [amino-group carrier protein]-C-terminal-N-(1-carboxy-5-phosphooxy-5-oxopentan-1-yl)-L-glutamine + ADP. The catalysed reaction is [amino-group carrier protein]-C-terminal-gamma-(L-glutamyl)-L-glutamate + ATP = [amino-group carrier protein]-C-terminal-gamma-(5-phospho-L-glutamyl)-L-glutamate + ADP. It functions in the pathway amino-acid biosynthesis; L-lysine biosynthesis via AAA pathway; L-lysine from L-alpha-aminoadipate (Thermus route): step 2/5. It participates in amino-acid biosynthesis; L-arginine biosynthesis. In terms of biological role, involved in both the arginine and lysine biosynthetic pathways. Phosphorylates the LysW-bound precursors glutamate (for arginine biosynthesis), respectively alpha-aminoadipate (for lysine biosynthesis). The protein is Putative [LysW]-aminoadipate/[LysW]-glutamate kinase of Pyrobaculum neutrophilum (strain DSM 2338 / JCM 9278 / NBRC 100436 / V24Sta) (Thermoproteus neutrophilus).